A 304-amino-acid polypeptide reads, in one-letter code: Uricase (304 aa).

The residue at position 2 (A2) is an N-acetylalanine. N6-acetyllysine; alternate occurs at positions 10 and 23. Residues K10 and K23 each carry the N6-succinyllysine; alternate modification. K23 serves as the catalytic Charge relay system. N6-acetyllysine is present on residues K27 and K36. Phosphoserine is present on residues S39 and S63. T68 functions as the Charge relay system in the catalytic mechanism. Urate is bound by residues T68 and D69. N6-acetyllysine is present on residues K118, K122, and K164. Residue F170 participates in urate binding. N6-acetyllysine occurs at positions 175 and 185. R187 contacts urate. Residues K221 and K228 each carry the N6-acetyllysine; alternate modification. K221 and K228 each carry N6-succinyllysine; alternate. S232 carries the phosphoserine modification. Residues V235, Q236, and N262 each coordinate urate. Residue H264 is the Charge relay system of the active site. N6-acetyllysine is present on K278. Y289 bears the Phosphotyrosine mark. The Microbody targeting signal signature appears at 302 to 304 (SRL).

It belongs to the uricase family.

The protein resides in the peroxisome. The enzyme catalyses urate + O2 + H2O = 5-hydroxyisourate + H2O2. It participates in purine metabolism; urate degradation; (S)-allantoin from urate: step 1/3. Functionally, catalyzes the oxidation of uric acid to 5-hydroxyisourate, which is further processed to form (S)-allantoin. The polypeptide is Uricase (UOX) (Macaca mulatta (Rhesus macaque)).